Here is a 627-residue protein sequence, read N- to C-terminus: Putative ankyrin repeat protein L122 (627 aa).

12 ANK repeats span residues 61–94, 98–130, 153–186, 190–223, 228–259, 263–296, 300–333, 337–370, 374–407, 411–444, 448–480, and 491–523; these read KGWTALMIACAMCDKWSSFKTIRLLLKKGADVHI, KGRTVLSLMVNIITENKFNIMDLLIDKGADINS, HACYVLGKSVDPNLEKNDSKTVRYLLDKGADPNI, YGKTVLFYAARMKNQDKAYEISKTLIERGGNANH, AETVLIYLCISCSHYSCELIQLLLDNGVDINH, IGFTALMCACINIKNPSNFETIKFMLDKGANINL, DGFTAFMNIFGNNYFDYIVPVIQIMLDYGADIND, NNVTVLMMAVKFAKNDKNMTVINFLLDKGADLEI, YDWTALFYACRYSNSSGNNDAVKLLLDYGANVNV, LGHTPLIIACQYADNESNIDTVKLLLEYGANPNL, DKNTALSVAITWLSKNRYEVVKLLLYYHADSNT, and REYNLLVWIVKNIKCNKLDLLMLLIEHGANYSD.

The protein is Putative ankyrin repeat protein L122 of Acanthamoeba polyphaga (Amoeba).